Here is a 449-residue protein sequence, read N- to C-terminus: RNA binding protein fox-1 homolog 2 (449 aa).

Over residues 1–21 the composition is skewed to low complexity; that stretch reads MAEGGQAQQQPPQLGPGAAAR. The disordered stretch occupies residues 1-186; the sequence is MAEGGQAQQQ…STPKRLHVSN (186 aa). Composition is skewed to polar residues over residues 77–86 and 118–138; these read QGNQEPTTTP and YAGQ…PHGE. The span at 139–176 shows a compositional bias: low complexity; sequence QSSNSPSNQNGSLTQTEGGAQTDGQQSQTQSSENSESK. Residues 180–256 enclose the RRM domain; it reads KRLHVSNIPF…RKIEVNNATA (77 aa). An omega-N-methylarginine mark is found at Arg236, Gly241, Tyr268, and Lys273. An asymmetric dimethylarginine mark is found at Glu285 and Pro317. Leu318, Leu323, Ala336, Arg340, and Gly341 each carry omega-N-methylarginine. 2 positions are modified to asymmetric dimethylarginine: Arg356 and Arg388. Asymmetric dimethylarginine; alternate is present on residues Arg440 and Arg445. Omega-N-methylarginine; alternate occurs at positions 440 and 445.

Interacts with ER-alpha N-terminal activation domain. Interacts with RBPMS; the interaction allows cooperative assembly of stable cell-specific alternative splicing regulatory complexes. In terms of tissue distribution, detected in brain neurons (at protein level). Detected in heart, brain, embryo, lung, liver, kidney and ovary.

The protein resides in the nucleus. The protein localises to the cytoplasm. Its function is as follows. RNA-binding protein that regulates alternative splicing events by binding to 5'-UGCAUGU-3' elements. Prevents binding of U2AF2 to the 3'-splice site. Regulates alternative splicing of tissue-specific exons and of differentially spliced exons during erythropoiesis. Seems to act as a coregulatory factor of ER-alpha. Together with RNA binding proteins RBPMS and MBNL1/2, activates vascular smooth muscle cells alternative splicing events. In Mus musculus (Mouse), this protein is RNA binding protein fox-1 homolog 2 (Rbfox2).